The chain runs to 545 residues: Glucose-6-phosphate isomerase (545 aa).

E351 serves as the catalytic Proton donor. Residues H382 and K510 contribute to the active site.

This sequence belongs to the GPI family.

It localises to the cytoplasm. It catalyses the reaction alpha-D-glucose 6-phosphate = beta-D-fructose 6-phosphate. It functions in the pathway carbohydrate biosynthesis; gluconeogenesis. It participates in carbohydrate degradation; glycolysis; D-glyceraldehyde 3-phosphate and glycerone phosphate from D-glucose: step 2/4. Its function is as follows. Catalyzes the reversible isomerization of glucose-6-phosphate to fructose-6-phosphate. The polypeptide is Glucose-6-phosphate isomerase (Shewanella sediminis (strain HAW-EB3)).